Here is a 98-residue protein sequence, read N- to C-terminus: MSRRCELTGKAVLTGNLVSHSNRKTRTRFLPNLCNVTLISDTLQRRIHFRVAAATLRSVEHRGGLDAFLVKAADAQLSPGALSVKREIVKKQAAAAAQ.

The protein belongs to the bacterial ribosomal protein bL28 family.

This Beijerinckia indica subsp. indica (strain ATCC 9039 / DSM 1715 / NCIMB 8712) protein is Large ribosomal subunit protein bL28.